We begin with the raw amino-acid sequence, 445 residues long: Tryptophan 5-hydroxylase 1 (445 aa).

The 76-residue stretch at 19–94 folds into the ACT domain; that stretch reads AIIFSLKNEV…SIVSMNPTEH (76 aa). Serine 58 is subject to Phosphoserine; by PKA. L-tryptophan-binding residues include tyrosine 236, arginine 258, and threonine 266. Histidine 273, histidine 278, and glutamate 318 together coordinate Fe cation. L-tryptophan contacts are provided by serine 337 and isoleucine 367.

Belongs to the biopterin-dependent aromatic amino acid hydroxylase family. As to quaternary structure, homotetramer. Fe(2+) serves as cofactor.

The enzyme catalyses (6R)-L-erythro-5,6,7,8-tetrahydrobiopterin + L-tryptophan + O2 = 5-hydroxy-L-tryptophan + (4aS,6R)-4a-hydroxy-L-erythro-5,6,7,8-tetrahydrobiopterin. The protein operates within aromatic compound metabolism; serotonin biosynthesis; serotonin from L-tryptophan: step 1/2. In terms of biological role, oxidizes L-tryptophan to 5-hydroxy-l-tryptophan in the rate-determining step of serotonin biosynthesis. The sequence is that of Tryptophan 5-hydroxylase 1 (TPH1) from Gallus gallus (Chicken).